The primary structure comprises 428 residues: Gamma-glutamyl phosphate reductase (428 aa).

Belongs to the gamma-glutamyl phosphate reductase family.

It localises to the cytoplasm. It catalyses the reaction L-glutamate 5-semialdehyde + phosphate + NADP(+) = L-glutamyl 5-phosphate + NADPH + H(+). It participates in amino-acid biosynthesis; L-proline biosynthesis; L-glutamate 5-semialdehyde from L-glutamate: step 2/2. Its function is as follows. Catalyzes the NADPH-dependent reduction of L-glutamate 5-phosphate into L-glutamate 5-semialdehyde and phosphate. The product spontaneously undergoes cyclization to form 1-pyrroline-5-carboxylate. This is Gamma-glutamyl phosphate reductase from Chromohalobacter salexigens (strain ATCC BAA-138 / DSM 3043 / CIP 106854 / NCIMB 13768 / 1H11).